A 516-amino-acid chain; its full sequence is MIPVSLVVVVVGGWTAVYLTDLVLKSSVYFKHSYEDWLENNGLSISPFHIRWQTAVFNRAFYSWGRRKARMLYQWFNFGMVFGVIAMFSSFFLLGKTLIQTLGQMMADSSYSSSSSSSSHSSSSSSSSSSSSSLYNEQVLQVVVPGINLPVNQLTYFFAAVLISGVVHEIGHGIAAIREQVRFNGFGIFLFIIYPGAFVDLFTTHLQLISPVQQLRIFCAGIWHNFILALLGILALILLPVILLPFYYTGVGVLITEVAEDSPAIGPRGLFVGDLVTHLQDCPVTNVQDWNECLDTITYEPQIGYCISASTLQQLSFPVRAYKRLDGSTECCNNHSLTDVCFSYRNNFNKRLHTCLPARKAVEATQVCRTNKDCKKSSSSSFCIIPSLETHTRLIKVKHPPQIDMLYVGHPLHLHYTVSITSFIPRFKFLSIDLPVVVETFVKYLISLSGALAIVNAVPCFALDGQWILNSFLDATLTSVIGDNDVKDLIGFFILLGGSILLAANVALGLWMVTAR.

At 1-3 the chain is on the cytoplasmic side; sequence MIP. A helical membrane pass occupies residues 4-24; the sequence is VSLVVVVVGGWTAVYLTDLVL. The Lumenal segment spans residues 25–74; the sequence is KSSVYFKHSYEDWLENNGLSISPFHIRWQTAVFNRAFYSWGRRKARMLYQ. Transmembrane regions (helical) follow at residues 75–95 and 96–107; these read WFNF…FLLG and KTLIQTLGQMMA. Residues 108–141 are Lumenal-facing; it reads DSSYSSSSSSSSHSSSSSSSSSSSSSLYNEQVLQ. Residues 142–166 form a helical membrane-spanning segment; sequence VVVPGINLPVNQLTYFFAAVLISGV. Histidine 168 lines the Zn(2+) pocket. Glutamate 169 is an active-site residue. Helical transmembrane passes span 171 to 183, 184 to 206, and 226 to 248; these read GHGI…QVRF, NGFG…TTHL, and FILA…PFYY. Histidine 172 lines the Zn(2+) pocket. Topologically, residues 249–443 are lumenal; it reads TGVGVLITEV…LPVVVETFVK (195 aa). Residue asparagine 334 is glycosylated (N-linked (GlcNAc...) asparagine). Helical transmembrane passes span 444–461 and 462–473; these read YLIS…VPCF and ALDGQWILNSFL. Residues 474-489 are Lumenal-facing; that stretch reads DATLTSVIGDNDVKDL. Residues 490-510 form a helical membrane-spanning segment; the sequence is IGFFILLGGSILLAANVALGL. The Cytoplasmic segment spans residues 511–516; the sequence is WMVTAR.

The protein belongs to the peptidase M50A family. The cofactor is Zn(2+).

The protein localises to the membrane. The protein resides in the cytoplasm. Its subcellular location is the golgi apparatus membrane. It carries out the reaction Cleaves several transcription factors that are type-2 transmembrane proteins within membrane-spanning domains. Known substrates include sterol regulatory element-binding protein (SREBP) -1, SREBP-2 and forms of the transcriptional activator ATF6. SREBP-2 is cleaved at the site 477-DRSRILL-|-CVLTFLCLSFNPLTSLLQWGGA-505. The residues Asn-Pro, 11 residues distal to the site of cleavage in the membrane-spanning domain, are important for cleavage by S2P endopeptidase. Replacement of either of these residues does not prevent cleavage, but there is no cleavage if both of these residues are replaced.. In terms of biological role, zinc metalloprotease that mediates intramembrane proteolysis of proteins such as ATF6, ATF6B, SREBF1/SREBP1 and SREBF2/SREBP2. Catalyzes the second step in the proteolytic activation of the sterol regulatory element-binding proteins (SREBPs) SREBF1/SREBP1 and SREBF2/SREBP2: cleaves SREBPs within the first transmembrane segment, thereby releasing the N-terminal segment with a portion of the transmembrane segment attached. Mature N-terminal SREBP fragments shuttle to the nucleus and activate gene transcription. Also mediates the second step in the proteolytic activation of the cyclic AMP-dependent transcription factor ATF-6 (ATF6 and ATF6B). Involved in intramembrane proteolysis during bone formation. In astrocytes and osteoblasts, upon DNA damage and ER stress, mediates the second step of the regulated intramembrane proteolytic activation of the transcription factor CREB3L1, leading to the inhibition of cell-cycle progression. This is Membrane-bound transcription factor site-2 protease from Bos taurus (Bovine).